A 140-amino-acid chain; its full sequence is Low calcium response locus protein T (140 aa).

The polypeptide is Low calcium response locus protein T (lcrT) (Yersinia pestis).